Consider the following 101-residue polypeptide: DNA-binding protein HU (101 aa).

The protein belongs to the bacterial histone-like protein family. As to quaternary structure, homodimer.

Histone-like DNA-binding protein which is capable of wrapping DNA to stabilize it, and thus to prevent its denaturation under extreme environmental conditions. This chain is DNA-binding protein HU (hup), found in Rickettsia bellii (strain RML369-C).